We begin with the raw amino-acid sequence, 2240 residues long: Death-inducer obliterator 1 (2240 aa).

Position 1 is an N-acetylmethionine (Met-1). Positions 1–25 are enriched in basic and acidic residues; that stretch reads MDDKGDPSNEEAPKAIKPTSKEFRK. The disordered stretch occupies residues 1 to 259; sequence MDDKGDPSNE…EPGDLGRPKP (259 aa). Phosphoserine is present on residues Ser-60 and Ser-114. Residues 111–130 show a composition bias toward polar residues; the sequence is SEGSVESASETRSGPQSAST. Residues 132-146 are compositionally biased toward basic and acidic residues; it reads VKERPASSEKVKGGD. Residues 147–156 are compositionally biased toward acidic residues; sequence DHDDTSDSDS. At Thr-151 the chain carries Phosphothreonine. 2 positions are modified to phosphoserine: Ser-152 and Ser-154. Short sequence motifs (nuclear localization signal) lie at residues 165 to 173 and 185 to 193; these read QNRLRRKRE and QSRLRKKRR. The segment covering 172–181 has biased composition (basic and acidic residues); the sequence is REQEPTERPL. Residues 230–246 show a composition bias toward basic and acidic residues; sequence GKDDRESKLEGKAAQDI. Lys-247 participates in a covalent cross-link: Glycyl lysine isopeptide (Lys-Gly) (interchain with G-Cter in SUMO2). The PHD-type zinc finger occupies 268–322; that stretch reads ALYCICRQPHNNRFMICCDRCEEWFHGDCVGISEARGRLLERNGEDYICPNCTIL. Disordered regions lie at residues 431–456, 501–567, 584–618, 773–826, 860–947, 1013–1045, 1206–1427, 1453–1472, and 1517–2240; these read SGKE…PKCG, STPS…RNLV, KKPP…GPAP, RPAR…EKST, VPSA…EDLS, LAKP…PEGD, GELD…VAYD, RRNS…TPSL, and SDAL…ASQA. The segment covering 433–451 has biased composition (basic and acidic residues); sequence KEQKPKPKEKMKMKPEKPS. Residues 501-510 show a composition bias toward polar residues; the sequence is STPSWASDHN. The residue at position 523 (Ser-523) is a Phosphoserine. Positions 530-541 are enriched in basic and acidic residues; sequence STKEDRRSEEKA. Low complexity-rich tracts occupy residues 542-551 and 604-618; these read AAMAASKKTA and PSSG…GPAP. The TFIIS central domain maps to 670–790; that stretch reads IRQNIRRSLK…SRTKLHNESK (121 aa). Positions 773-791 are enriched in basic and acidic residues; it reads RPARSVMESRTKLHNESKK. Positions 800 to 815 are enriched in acidic residues; that stretch reads PDLEDSPPVSDSEEQQ. Residues Ser-805 and Ser-809 each carry the phosphoserine modification. A compositionally biased stretch (basic and acidic residues) spans 878-890; sequence VKKEDLKSKHDSS. A Glycyl lysine isopeptide (Lys-Gly) (interchain with G-Cter in SUMO2) cross-link involves residue Lys-879. 2 positions are modified to phosphoserine: Ser-889 and Ser-898. Residues 930–941 show a composition bias toward pro residues; that stretch reads PGPPGDGHPEPS. Phosphoserine occurs at positions 1019, 1030, and 1040. Over residues 1207–1220 the composition is skewed to basic and acidic residues; that stretch reads ELDKMDEKRTRLQP. Tyr-1244 carries the post-translational modification Phosphotyrosine. At Thr-1256 the chain carries Phosphothreonine. Over residues 1258–1271 the composition is skewed to pro residues; it reads PGSPPPPPPLPEPP. Ser-1260 and Ser-1312 each carry phosphoserine. A compositionally biased stretch (low complexity) spans 1276–1313; sequence LSSLKPAAPSPATAATTAAAASTAASSTASSASKTASP. Residues 1376 to 1392 are compositionally biased toward acidic residues; the sequence is LEEEEDDRPYDPEEEYD. Residues 1393 to 1424 are compositionally biased toward basic and acidic residues; the sequence is PERAFDTQLVERGRRHEVERAPEAAAAEREEV. Residue Ser-1456 is modified to Phosphoserine. Phosphothreonine is present on Thr-1469. Phosphoserine occurs at positions 1522 and 1714. Positions 1771–1782 are enriched in pro residues; it reads FPGPRGPAPPFP. Arg-1835 carries the omega-N-methylarginine modification. Residues 1842-1856 show a composition bias toward basic and acidic residues; that stretch reads FEERKDPHGEKREFQ. Asymmetric dimethylarginine is present on residues Arg-1893, Arg-1894, Arg-1977, Arg-1982, Arg-1993, Arg-2008, and Arg-2024. Low complexity predominate over residues 2044–2059; sequence AGPPSALSSSAPGQGP. 2 stretches are compositionally biased toward basic and acidic residues: residues 2069–2101 and 2109–2230; these read DFRE…KPLE and ASED…EASR.

As to quaternary structure, interacts specifically (via PHD-type zinc finger) with histone H3 that is trimethylated at 'Lys-4' (H3K4me3), histone phosphorylation at 'Thr-3' or 'Thr-6' disrupts this binding and promotes translocation of DIDO1 from chromatin to the mitotic spindle during mitosis. Ubiquitous.

It is found in the cytoplasm. The protein resides in the nucleus. It localises to the cytoskeleton. Its subcellular location is the spindle. Functionally, putative transcription factor, weakly pro-apoptotic when overexpressed. Tumor suppressor. Required for early embryonic stem cell development. Displaces isoform 4 at the onset of differentiation, required for repression of stemness genes. The chain is Death-inducer obliterator 1 (DIDO1) from Homo sapiens (Human).